The following is a 610-amino-acid chain: Methionine--tRNA ligase (610 aa).

The 'HIGH' region signature appears at 12-22 (PYANGPRHIGH). 4 residues coordinate Zn(2+): C144, C147, C157, and C160. The 'KMSKS' region signature appears at 348–352 (KFSSS). S351 serves as a coordination point for ATP.

This sequence belongs to the class-I aminoacyl-tRNA synthetase family. MetG type 1 subfamily. In terms of assembly, monomer. Requires Zn(2+) as cofactor.

It localises to the cytoplasm. It carries out the reaction tRNA(Met) + L-methionine + ATP = L-methionyl-tRNA(Met) + AMP + diphosphate. Its function is as follows. Is required not only for elongation of protein synthesis but also for the initiation of all mRNA translation through initiator tRNA(fMet) aminoacylation. In Corynebacterium glutamicum (strain R), this protein is Methionine--tRNA ligase.